We begin with the raw amino-acid sequence, 226 residues long: ATP-dependent dethiobiotin synthetase BioD (226 aa).

13–18 contributes to the ATP binding site; that stretch reads DVGKTL. Thr-17 serves as a coordination point for Mg(2+). Residue Lys-38 is part of the active site. Residues Asp-55, 117–120, 177–178, 206–208, and Glu-213 each bind ATP; these read EGAG, NR, and PFV. Asp-55 and Glu-117 together coordinate Mg(2+).

The protein belongs to the dethiobiotin synthetase family. Homodimer. The cofactor is Mg(2+).

It localises to the cytoplasm. The catalysed reaction is (7R,8S)-7,8-diammoniononanoate + CO2 + ATP = (4R,5S)-dethiobiotin + ADP + phosphate + 3 H(+). The protein operates within cofactor biosynthesis; biotin biosynthesis; biotin from 7,8-diaminononanoate: step 1/2. In terms of biological role, catalyzes a mechanistically unusual reaction, the ATP-dependent insertion of CO2 between the N7 and N8 nitrogen atoms of 7,8-diaminopelargonic acid (DAPA, also called 7,8-diammoniononanoate) to form a ureido ring. The sequence is that of ATP-dependent dethiobiotin synthetase BioD from Aeromonas salmonicida (strain A449).